We begin with the raw amino-acid sequence, 718 residues long: GMP synthase [glutamine-hydrolyzing] (718 aa).

Residues 43 to 247 form the Glutamine amidotransferase type-1 domain; that stretch reads VIVILDAGSQ…LIDICGCSAN (205 aa). Residues C128, H221, and E223 each act as for GATase activity in the active site. One can recognise a GMPS ATP-PPase domain in the interval 248–457; it reads YTLDDREQQA…LGLSDSLVWR (210 aa). Residue 275-281 participates in ATP binding; the sequence is SGGVDST.

In terms of assembly, homodimer.

The enzyme catalyses XMP + L-glutamine + ATP + H2O = GMP + L-glutamate + AMP + diphosphate + 2 H(+). It functions in the pathway purine metabolism; GMP biosynthesis; GMP from XMP (L-Gln route): step 1/1. This chain is GMP synthase [glutamine-hydrolyzing] (guaA), found in Dictyostelium discoideum (Social amoeba).